We begin with the raw amino-acid sequence, 252 residues long: Chitooligosaccharide deacetylase (252 aa).

Positions 61 and 125 each coordinate Mg(2+).

It belongs to the YdjC deacetylase family. ChbG subfamily. As to quaternary structure, homodimer. Mg(2+) serves as cofactor.

The protein resides in the cytoplasm. The catalysed reaction is N,N'-diacetylchitobiose + H2O = N-acetyl-beta-D-glucosaminyl-(1-&gt;4)-D-glucosamine + acetate. It catalyses the reaction diacetylchitobiose-6'-phosphate + H2O = N'-monoacetylchitobiose-6'-phosphate + acetate. It participates in glycan degradation; chitin degradation. Its function is as follows. Involved in the degradation of chitin. ChbG is essential for growth on the acetylated chitooligosaccharides chitobiose and chitotriose but is dispensable for growth on cellobiose and chitosan dimer, the deacetylated form of chitobiose. Deacetylation of chitobiose-6-P and chitotriose-6-P is necessary for both the activation of the chb promoter by the regulatory protein ChbR and the hydrolysis of phosphorylated beta-glucosides by the phospho-beta-glucosidase ChbF. Catalyzes the removal of only one acetyl group from chitobiose-6-P to yield monoacetylchitobiose-6-P, the inducer of ChbR and the substrate of ChbF. The polypeptide is Chitooligosaccharide deacetylase (Escherichia coli O6:K15:H31 (strain 536 / UPEC)).